Consider the following 123-residue polypeptide: Histone H2B (123 aa).

A disordered region spans residues 1–31 (MPPKVASKGAKKAASKAKAARSGEKKKKRRR). The segment covering 9 to 31 (GAKKAASKAKAARSGEKKKKRRR) has biased composition (basic residues). Serine 110 carries an O-linked (GlcNAc) serine glycan. A Glycyl lysine isopeptide (Lys-Gly) (interchain with G-Cter in ubiquitin) cross-link involves residue lysine 118.

This sequence belongs to the histone H2B family. As to quaternary structure, the nucleosome is a histone octamer containing two molecules each of H2A, H2B, H3 and H4 assembled in one H3-H4 heterotetramer and two H2A-H2B heterodimers. The octamer wraps approximately 147 bp of DNA. Monoubiquitination of Lys-118 gives a specific tag for epigenetic transcriptional activation and is also prerequisite for histone H3 'Lys-4' and 'Lys-79' methylation. Post-translationally, glcNAcylation at Ser-110 promotes monoubiquitination of Lys-118. It fluctuates in response to extracellular glucose, and associates with transcribed genes.

It localises to the nucleus. The protein localises to the chromosome. In terms of biological role, core component of nucleosome. Nucleosomes wrap and compact DNA into chromatin, limiting DNA accessibility to the cellular machineries which require DNA as a template. Histones thereby play a central role in transcription regulation, DNA repair, DNA replication and chromosomal stability. DNA accessibility is regulated via a complex set of post-translational modifications of histones, also called histone code, and nucleosome remodeling. The protein is Histone H2B of Platynereis dumerilii (Dumeril's clam worm).